We begin with the raw amino-acid sequence, 432 residues long: Adenylosuccinate synthetase (432 aa).

Residues 13–19 and 41–43 contribute to the GTP site; these read GDEGKGK and GHT. Asp-14 serves as the catalytic Proton acceptor. Mg(2+) is bound by residues Asp-14 and Gly-41. IMP is bound by residues 14 to 17, 39 to 42, Thr-130, Arg-144, Gln-225, Thr-240, and Arg-304; these read DEGK and NAGH. His-42 functions as the Proton donor in the catalytic mechanism. 300 to 306 serves as a coordination point for substrate; sequence ATTGRRR. Residues Arg-306, 332–334, and 415–417 each bind GTP; these read KLD and STG.

Belongs to the adenylosuccinate synthetase family. In terms of assembly, homodimer. Mg(2+) is required as a cofactor.

The protein localises to the cytoplasm. The enzyme catalyses IMP + L-aspartate + GTP = N(6)-(1,2-dicarboxyethyl)-AMP + GDP + phosphate + 2 H(+). Its pathway is purine metabolism; AMP biosynthesis via de novo pathway; AMP from IMP: step 1/2. Its function is as follows. Plays an important role in the de novo pathway of purine nucleotide biosynthesis. Catalyzes the first committed step in the biosynthesis of AMP from IMP. The chain is Adenylosuccinate synthetase from Salmonella paratyphi A (strain AKU_12601).